Consider the following 393-residue polypeptide: NAD(P)H-quinone oxidoreductase subunit H, chloroplastic (393 aa).

This sequence belongs to the complex I 49 kDa subunit family. NDH is composed of at least 16 different subunits, 5 of which are encoded in the nucleus.

It is found in the plastid. It localises to the chloroplast thylakoid membrane. The catalysed reaction is a plastoquinone + NADH + (n+1) H(+)(in) = a plastoquinol + NAD(+) + n H(+)(out). The enzyme catalyses a plastoquinone + NADPH + (n+1) H(+)(in) = a plastoquinol + NADP(+) + n H(+)(out). Functionally, NDH shuttles electrons from NAD(P)H:plastoquinone, via FMN and iron-sulfur (Fe-S) centers, to quinones in the photosynthetic chain and possibly in a chloroplast respiratory chain. The immediate electron acceptor for the enzyme in this species is believed to be plastoquinone. Couples the redox reaction to proton translocation, and thus conserves the redox energy in a proton gradient. This is NAD(P)H-quinone oxidoreductase subunit H, chloroplastic from Oryza nivara (Indian wild rice).